Here is a 202-residue protein sequence, read N- to C-terminus: ATP-dependent Clp protease proteolytic subunit (202 aa).

The Nucleophile role is filled by Ser106. Residue His131 is part of the active site.

This sequence belongs to the peptidase S14 family. As to quaternary structure, fourteen ClpP subunits assemble into 2 heptameric rings which stack back to back to give a disk-like structure with a central cavity, resembling the structure of eukaryotic proteasomes.

It is found in the cytoplasm. The enzyme catalyses Hydrolysis of proteins to small peptides in the presence of ATP and magnesium. alpha-casein is the usual test substrate. In the absence of ATP, only oligopeptides shorter than five residues are hydrolyzed (such as succinyl-Leu-Tyr-|-NHMec, and Leu-Tyr-Leu-|-Tyr-Trp, in which cleavage of the -Tyr-|-Leu- and -Tyr-|-Trp bonds also occurs).. Cleaves peptides in various proteins in a process that requires ATP hydrolysis. Has a chymotrypsin-like activity. Plays a major role in the degradation of misfolded proteins. This chain is ATP-dependent Clp protease proteolytic subunit, found in Verminephrobacter eiseniae (strain EF01-2).